The primary structure comprises 289 residues: 4-hydroxy-tetrahydrodipicolinate synthase (289 aa).

Pyruvate is bound at residue Thr-44. The Proton donor/acceptor role is filled by Tyr-130. Residue Lys-158 is the Schiff-base intermediate with substrate of the active site. Position 200 (Ile-200) interacts with pyruvate.

It belongs to the DapA family. In terms of assembly, homotetramer; dimer of dimers.

It localises to the cytoplasm. The enzyme catalyses L-aspartate 4-semialdehyde + pyruvate = (2S,4S)-4-hydroxy-2,3,4,5-tetrahydrodipicolinate + H2O + H(+). It functions in the pathway amino-acid biosynthesis; L-lysine biosynthesis via DAP pathway; (S)-tetrahydrodipicolinate from L-aspartate: step 3/4. Its function is as follows. Catalyzes the condensation of (S)-aspartate-beta-semialdehyde [(S)-ASA] and pyruvate to 4-hydroxy-tetrahydrodipicolinate (HTPA). This is 4-hydroxy-tetrahydrodipicolinate synthase from Archaeoglobus fulgidus (strain ATCC 49558 / DSM 4304 / JCM 9628 / NBRC 100126 / VC-16).